Reading from the N-terminus, the 344-residue chain is MKPKLLFEQLLSRQDLSSDQMQEVIHACMTGEFSDVQIATFLALMRMKSETVNELTAAAKVMRQLAHKIDLGNPLIDIVGTGGDGRNTFNVSTACSFVVAAAGIKVAKHGNRSVSSRSGSADLLEQAGFILNLSDSQVQNCINQCQLAFLFAPHYHPAMQHARAARQQLGIRTLFNLLGPLINPAQVKRQVVGVFSTNWLKTIATVLANLGSERSLVISSQDGLDEISIAAKSEVVEYRDGNFKQWFISPEDYGLKHSSLDAIIVDSPEQSLHLIQSVLSGDSGPARDIVLLNSAAAIYCAKDGISFDASIEEARIAIDSGKANHCFNKLRLLTQTLNKESNHE.

5-phospho-alpha-D-ribose 1-diphosphate contacts are provided by residues Gly-80, 83 to 84 (GD), Thr-88, 90 to 93 (NVST), 108 to 116 (KHGNRSVSS), and Ser-120. An anthranilate-binding site is contributed by Gly-80. Mg(2+) is bound at residue Ser-92. Asn-111 provides a ligand contact to anthranilate. Arg-166 serves as a coordination point for anthranilate. Residues Asp-225 and Glu-226 each coordinate Mg(2+).

Belongs to the anthranilate phosphoribosyltransferase family. In terms of assembly, homodimer. It depends on Mg(2+) as a cofactor.

It carries out the reaction N-(5-phospho-beta-D-ribosyl)anthranilate + diphosphate = 5-phospho-alpha-D-ribose 1-diphosphate + anthranilate. It participates in amino-acid biosynthesis; L-tryptophan biosynthesis; L-tryptophan from chorismate: step 2/5. In terms of biological role, catalyzes the transfer of the phosphoribosyl group of 5-phosphorylribose-1-pyrophosphate (PRPP) to anthranilate to yield N-(5'-phosphoribosyl)-anthranilate (PRA). This is Anthranilate phosphoribosyltransferase from Legionella pneumophila (strain Corby).